We begin with the raw amino-acid sequence, 280 residues long: 3-deoxy-manno-octulosonate cytidylyltransferase (280 aa).

Belongs to the KdsB family.

The protein localises to the cytoplasm. It carries out the reaction 3-deoxy-alpha-D-manno-oct-2-ulosonate + CTP = CMP-3-deoxy-beta-D-manno-octulosonate + diphosphate. It functions in the pathway nucleotide-sugar biosynthesis; CMP-3-deoxy-D-manno-octulosonate biosynthesis; CMP-3-deoxy-D-manno-octulosonate from 3-deoxy-D-manno-octulosonate and CTP: step 1/1. Its pathway is bacterial outer membrane biogenesis; lipopolysaccharide biosynthesis. Its function is as follows. Activates KDO (a required 8-carbon sugar) for incorporation into bacterial lipopolysaccharide in Gram-negative bacteria. The protein is 3-deoxy-manno-octulosonate cytidylyltransferase of Colwellia psychrerythraea (strain 34H / ATCC BAA-681) (Vibrio psychroerythus).